Here is a 215-residue protein sequence, read N- to C-terminus: L-fuculose phosphate aldolase (215 aa).

Residues Gly28–Asn29, Thr43–Gly44, and Ser71–Ser72 each bind substrate. Glu73 acts as the Proton donor/acceptor in catalysis. 4 residues coordinate Zn(2+): Glu73, His92, His94, and His155.

Belongs to the aldolase class II family. AraD/FucA subfamily. As to quaternary structure, homotetramer. Requires Zn(2+) as cofactor.

The enzyme catalyses L-fuculose 1-phosphate = (S)-lactaldehyde + dihydroxyacetone phosphate. The protein operates within carbohydrate degradation; L-fucose degradation; L-lactaldehyde and glycerone phosphate from L-fucose: step 3/3. In terms of biological role, involved in the degradation of L-fucose and D-arabinose. Catalyzes the reversible cleavage of L-fuculose 1-phosphate (Fuc1P) to yield dihydroxyacetone phosphate (DHAP) and L-lactaldehyde. The polypeptide is L-fuculose phosphate aldolase (Escherichia coli O6:H1 (strain CFT073 / ATCC 700928 / UPEC)).